The primary structure comprises 84 residues: uncharacterized protein (84 aa).

Its function is as follows. This protein may be involved in virus assembly. This is an uncharacterized protein from Saccharolobus solfataricus (Sulfolobus solfataricus).